Consider the following 426-residue polypeptide: Endothelin-1 receptor (426 aa).

The first 20 residues, 1–20 (MGVLCFLASFWLALVGGAIA), serve as a signal peptide directing secretion. The Extracellular portion of the chain corresponds to 21–80 (DNAERYSANLSSHVEDFTPFPGTEFNFLGTTLQPPNLALPSNGSMHGYCPQQTKITTAFK). N-linked (GlcNAc...) asparagine glycosylation is found at Asn29 and Asn62. The chain crosses the membrane as a helical span at residues 81-102 (YINTVISCTIFIVGMVGNATLL). Topologically, residues 103 to 112 (RIIYQNKCMR) are cytoplasmic. The helical transmembrane segment at 113-132 (NGPNALIASLALGDLIYVVI) threads the bilayer. The Extracellular portion of the chain corresponds to 133 to 159 (DLPINVFKLLAGRWPFDHNDFGVFLCK). A disulfide bridge connects residues Cys158 and Cys239. Residues 160–181 (LFPFLQKSSVGITVLNLCALSV) form a helical membrane-spanning segment. At 182 to 205 (DRYRAVASWSRVQGIGIPLITAIE) the chain is on the cytoplasmic side. A helical membrane pass occupies residues 206-229 (IVSIWILSFILAIPEAIGFVMVPF). At 230–256 (EYKGEQHRTCMLNATTKFMEFYQDVKD) the chain is on the extracellular side. Residues 257–278 (WWLFGFYFCMPLVCTAIFYTLM) traverse the membrane as a helical segment. At 279 to 306 (TCEMLNRRNGSLRIALSEHLKQRREVAK) the chain is on the cytoplasmic side. Residues 307-328 (TVFCLVVIFALCWFPLHLSRIL) form a helical membrane-spanning segment. Residues 329-347 (KKTVYDEMDKNRCELLSFL) are Extracellular-facing. Residues 348–372 (LLMDYIGINLATMNSCINPIALYFV) traverse the membrane as a helical segment. The Cytoplasmic portion of the chain corresponds to 373 to 426 (SKKFKNCFQSCLCCCCHQSKSLMTSVPMNGTSIQWKNQEQNHNTERSSHKDSMN). At Ser424 the chain carries Phosphoserine.

This sequence belongs to the G-protein coupled receptor 1 family. Endothelin receptor subfamily. EDNRA sub-subfamily. In terms of assembly, interacts with HDAC7 and KAT5. As to expression, predominantly expressed in vascular smooth muscle cells of a variety of issues, bronchial smooth muscle cells, myocardium, and the pituitary gland.

Its subcellular location is the cell membrane. Its function is as follows. Receptor for endothelin-1. Mediates its action by association with G proteins that activate a phosphatidylinositol-calcium second messenger system. The rank order of binding affinities for ET-A is: ET1 &gt; ET2 &gt;&gt; ET3. The sequence is that of Endothelin-1 receptor from Rattus norvegicus (Rat).